Reading from the N-terminus, the 423-residue chain is Dihydroorotase (423 aa).

Zn(2+) contacts are provided by His56 and His58. Residues 58-60 (HFR) and Asn89 each bind substrate. Residues Lys137, His168, His227, and Asp302 each contribute to the Zn(2+) site. At Lys137 the chain carries N6-carboxylysine. Asp302 is a catalytic residue. His306 provides a ligand contact to substrate.

Belongs to the metallo-dependent hydrolases superfamily. DHOase family. Class I DHOase subfamily. Zn(2+) serves as cofactor.

It carries out the reaction (S)-dihydroorotate + H2O = N-carbamoyl-L-aspartate + H(+). It functions in the pathway pyrimidine metabolism; UMP biosynthesis via de novo pathway; (S)-dihydroorotate from bicarbonate: step 3/3. Its function is as follows. Catalyzes the reversible cyclization of carbamoyl aspartate to dihydroorotate. This is Dihydroorotase from Methanocaldococcus jannaschii (strain ATCC 43067 / DSM 2661 / JAL-1 / JCM 10045 / NBRC 100440) (Methanococcus jannaschii).